Consider the following 464-residue polypeptide: tRNA modification GTPase MnmE (464 aa).

(6S)-5-formyl-5,6,7,8-tetrahydrofolate is bound by residues Arg-27, Glu-89, and Arg-128. Residues 225–384 (GLATAIVGRP…LEETIAHLFF (160 aa)) form the TrmE-type G domain. K(+) is bound at residue Asn-235. Residues 235 to 240 (NVGKSS), 254 to 260 (TDVAGTT), and 279 to 282 (DTAG) each bind GTP. Ser-239 contacts Mg(2+). Thr-254, Val-256, and Thr-259 together coordinate K(+). Thr-260 is a binding site for Mg(2+). Lys-464 is a (6S)-5-formyl-5,6,7,8-tetrahydrofolate binding site.

This sequence belongs to the TRAFAC class TrmE-Era-EngA-EngB-Septin-like GTPase superfamily. TrmE GTPase family. In terms of assembly, homodimer. Heterotetramer of two MnmE and two MnmG subunits. K(+) is required as a cofactor.

The protein resides in the cytoplasm. Exhibits a very high intrinsic GTPase hydrolysis rate. Involved in the addition of a carboxymethylaminomethyl (cmnm) group at the wobble position (U34) of certain tRNAs, forming tRNA-cmnm(5)s(2)U34. This Levilactobacillus brevis (strain ATCC 367 / BCRC 12310 / CIP 105137 / JCM 1170 / LMG 11437 / NCIMB 947 / NCTC 947) (Lactobacillus brevis) protein is tRNA modification GTPase MnmE.